The chain runs to 92 residues: MAPGERKKSSRKKKDPDAPKRSLSAYMFFANENRDIVRAENPGISFGQVGKLLGEKWKALNSEDKLPYENKAEADKKRYEKEKAEYAKKNSA.

Disordered stretches follow at residues 1 to 22 (MAPGERKKSSRKKKDPDAPKRS) and 64 to 92 (DKLPYENKAEADKKRYEKEKAEYAKKNSA). The segment at residues 19–87 (PKRSLSAYMF…RYEKEKAEYA (69 aa)) is a DNA-binding region (HMG box).

It belongs to the NHP6 family. In terms of assembly, weakly associates with the stable SPT16-POB3 heterodimer to form the FACT complex.

It localises to the nucleus. The protein localises to the chromosome. DNA-binding protein that induces severe bending of DNA. Required for DNA-binding by the FACT complex, a general chromatin factor that acts to reorganize nucleosomes. The FACT complex is involved in multiple processes that require DNA as a template such as mRNA elongation, DNA replication and DNA repair. Also augments the fidelity of transcription by RNA polymerase III independently of any role in the FACT complex. This is Non-histone chromosomal protein 6 (NHP6) from Candida albicans (strain SC5314 / ATCC MYA-2876) (Yeast).